Here is a 256-residue protein sequence, read N- to C-terminus: Phosphatidylglycerol--prolipoprotein diacylglyceryl transferase (256 aa).

3 consecutive transmembrane segments (helical) span residues 19–39, 56–76, and 91–111; these read VHWY…LGYW, LIFY…MLFY, and IWEG…AAWL. Arg139 serves as a coordination point for a 1,2-diacyl-sn-glycero-3-phospho-(1'-sn-glycerol). Residues 231–251 traverse the membrane as a helical segment; that stretch reads FGWLTMGQVLSIPMLLIGIWL.

It belongs to the Lgt family.

The protein resides in the cell inner membrane. It catalyses the reaction L-cysteinyl-[prolipoprotein] + a 1,2-diacyl-sn-glycero-3-phospho-(1'-sn-glycerol) = an S-1,2-diacyl-sn-glyceryl-L-cysteinyl-[prolipoprotein] + sn-glycerol 1-phosphate + H(+). Its pathway is protein modification; lipoprotein biosynthesis (diacylglyceryl transfer). Catalyzes the transfer of the diacylglyceryl group from phosphatidylglycerol to the sulfhydryl group of the N-terminal cysteine of a prolipoprotein, the first step in the formation of mature lipoproteins. The protein is Phosphatidylglycerol--prolipoprotein diacylglyceryl transferase of Legionella pneumophila subsp. pneumophila (strain Philadelphia 1 / ATCC 33152 / DSM 7513).